The sequence spans 602 residues: Pro-neuregulin-1, membrane-bound isoform (602 aa).

Residues 1 to 206 (MWATSEGPLQ…MEAEELYQKR (206 aa)) lie on the Extracellular side of the membrane. A glycan (N-linked (GlcNAc...) asparagine) is linked at Asn-21. The Ig-like C2-type domain occupies 29 to 123 (PKLKEMKNQE…DSTKASVIIT (95 aa)). A disulfide bridge links Cys-49 with Cys-105. N-linked (GlcNAc...) asparagine glycans are attached at residues Asn-113 and Asn-126. Residues 137 to 181 (HLTKCDIKQKAFCVNGGECYMVKDLPNPPRYLCRCPNEFTGDRCQ) form the EGF-like domain. Cystine bridges form between Cys-141/Cys-155, Cys-149/Cys-169, and Cys-171/Cys-180. A helical transmembrane segment spans residues 207-229 (VLTITGICIALLVVGIMCVVAYC). Topologically, residues 230 to 602 (KTKKQRKKLH…VIANQDPIAV (373 aa)) are cytoplasmic. Disordered stretches follow at residues 293–366 (ETSF…EGNS), 391–421 (MTTPARMSPVDFHTPTSPKSPPSEMSPPVSS), 460–479 (FNSFHNNPTHESNSLPPSPL), and 486–553 (EYET…FLSI). Residues 294–314 (TSFSTSHYTSTTHHSMTVTQT) show a composition bias toward low complexity. Polar residues predominate over residues 315-324 (PSHSWSNGHT). Positions 325–341 (ESILSESHSVLVSSSVE) are enriched in low complexity. Over residues 460 to 474 (FNSFHNNPTHESNSL) the composition is skewed to polar residues. Basic residues predominate over residues 504–514 (TNSRRVKRTKP). Positions 527 to 536 (DTSSQSTSSE) are enriched in low complexity.

The protein belongs to the neuregulin family. Proteolytic cleavage close to the plasma membrane on the external face leads to the release of the soluble growth factor form. Post-translationally, extensive glycosylation precedes the proteolytic cleavage.

It is found in the cell membrane. Its subcellular location is the secreted. Its function is as follows. Direct ligand for the ERBB tyrosine kinase receptors. The multiple isoforms perform diverse functions: cysteine-rich domain containing isoforms (isoform 2-isoform 4) probably regulate the expression of nicotinic acetylcholine receptors at developing interneuronal synapses. Isoform Ig-NRG is required for the initial induction and/or maintenance of the mature levels of acetylcholine receptors at neuromuscular synapses. Binds to ERBB3 and integrins to form a complex which is essential for NRG1-ERBB signaling. The chain is Pro-neuregulin-1, membrane-bound isoform (NRG1) from Gallus gallus (Chicken).